Reading from the N-terminus, the 143-residue chain is Large ribosomal subunit protein uL11 (143 aa).

It belongs to the universal ribosomal protein uL11 family. Part of the ribosomal stalk of the 50S ribosomal subunit. Interacts with L10 and the large rRNA to form the base of the stalk. L10 forms an elongated spine to which L12 dimers bind in a sequential fashion forming a multimeric L10(L12)X complex. In terms of processing, one or more lysine residues are methylated.

Its function is as follows. Forms part of the ribosomal stalk which helps the ribosome interact with GTP-bound translation factors. This Burkholderia cenocepacia (strain HI2424) protein is Large ribosomal subunit protein uL11.